The sequence spans 209 residues: Amelotin (209 aa).

Positions 1-16 (MRSTILLFCLLGSTRS) are cleaved as a signal peptide. Residues 142 to 209 (AGANPDVQDG…ATTESANGIQ (68 aa)) form a disordered region.

Belongs to the amelotin family. Phosphorylated by FAM20C in vitro. In terms of processing, O-glycosylated.

It localises to the secreted. In terms of biological role, is a promoter of calcium phosphate mineralization, playing a critical role in the formation of the compact, mineralized, aprismatic enamel surface layer during the maturation stage of amelogenesis. This is Amelotin (AMTN) from Homo sapiens (Human).